A 267-amino-acid chain; its full sequence is U6 snRNA phosphodiesterase 1 (267 aa).

Polar residues predominate over residues 1–13; sequence MSSAPLVGYSSSG. The tract at residues 1–74 is disordered; it reads MSSAPLVGYS…DSAKHGGRIR (74 aa). The Proton acceptor role is filled by His122. 122–124 is an AMP binding site; that stretch reads HVS. Residues Gln166, Tyr204, and 208–212 contribute to the UMP site; that span reads SFHIS. AMP-binding positions include Tyr204 and 206-212; that span reads DPSFHIS. Residue His210 is the Proton donor of the active site.

This sequence belongs to the 2H phosphoesterase superfamily. USB1 family. In terms of assembly, interacts with PLRG1, CDC5L and PRPF19.

Its subcellular location is the nucleus. It carries out the reaction a 3'-end uridylyl-uridine-RNA = a 3'-end 2',3'-cyclophospho-uridine-RNA + uridine. The catalysed reaction is a 3'-end uridylyl-adenosine-RNA = a 3'-end 2',3'-cyclophospho-uridine-RNA + adenosine. In terms of biological role, 3'-5' RNA exonuclease that trims the 3' end of oligo(U) and oligo(A) tracts of the pre-U6 small nuclear RNA (snRNA) molecule, leading to the formation of a mature U6 snRNA 3' end-terminated with a 2',3'-cyclic phosphate. Participates in the U6 snRNA 3' end processing that prevents U6 snRNA degradation. In addition also removes uridines from the 3' end of U6atac snRNA and possibly the vault RNA VTRNA1-1. The protein is U6 snRNA phosphodiesterase 1 of Mus musculus (Mouse).